The primary structure comprises 354 residues: uncharacterized protein (354 aa).

Positions 1–21 (MFQKKTYAVFLILLLMMFTAA) are cleaved as a signal peptide. A lipid anchor (N-palmitoyl cysteine) is attached at Cys-22. Residue Cys-22 is the site of S-diacylglycerol cysteine attachment.

It localises to the cell membrane. The protein resides in the membrane raft. This is an uncharacterized protein from Bacillus subtilis (strain 168).